The primary structure comprises 809 residues: Leucine-rich repeat and calponin homology domain-containing protein (809 aa).

The disordered stretch occupies residues 27 to 53 (GSASLPGSGTGSGSGIGHAGNTSSSTS). The segment covering 34-44 (SGTGSGSGIGH) has biased composition (gly residues). 9 LRR repeats span residues 72–96 (EAHF…GTKY), 98–121 (LTDT…VTTF), 122–144 (AFLE…VKQL), 145–168 (SSLT…CFLP), 170–189 (QVLL…LGRL), 191–213 (QTLT…LGEL), 214–236 (RSLR…LTCL), 238–258 (LISL…IRHM), and 260–282 (TLVE…CMRG). Disordered regions lie at residues 295 to 373 (TKDE…LHCV), 423 to 442 (LSYA…QDDD), and 490 to 550 (KHPN…VDDV). Residues 319–336 (HNSSGNVLEASTTGSTNN) are compositionally biased toward polar residues. The segment covering 351–368 (GLDKRWSHDAPTKSKTDS) has biased composition (basic and acidic residues). Polar residues predominate over residues 518-532 (NTLPKSIMKQNSNQI). One can recognise a Calponin-homology (CH) domain in the interval 662–776 (QREETELMSQ…TVGELFRLHG (115 aa)). The disordered stretch occupies residues 783-809 (GNSSGAATPTKSPTRTTRATMSPTPLA). A compositionally biased stretch (polar residues) spans 788–809 (AATPTKSPTRTTRATMSPTPLA).

Its subcellular location is the cytoplasm. The protein resides in the cytoskeleton. It is found in the cell cortex. It localises to the cleavage furrow. In terms of biological role, may play a role in the stabilization of the actin-rich cell cortex during cell division. This Drosophila melanogaster (Fruit fly) protein is Leucine-rich repeat and calponin homology domain-containing protein.